A 269-amino-acid chain; its full sequence is Myelin protein zero-like protein 1 (269 aa).

The signal sequence occupies residues 1–35; it reads MAAPAGAGALIASPDRRRCLWSVLAAALGLLTYGV. Positions 36–146 constitute an Ig-like V-type domain; that stretch reads SALEVYTPKE…VKNPPDIVVQ (111 aa). Residues 36–162 lie on the Extracellular side of the membrane; it reads SALEVYTPKE…YVVEKEILPA (127 aa). Residues Asn50, Asn64, and Asn130 are each glycosylated (N-linked (GlcNAc...) asparagine). The cysteines at positions 58 and 135 are disulfide-linked. A helical membrane pass occupies residues 163-183; sequence FPVWVVVGIVTAVVLGLTLLI. Over 184 to 269 the chain is Cytoplasmic; the sequence is TMILAVIYRR…SVVYADIRKN (86 aa). Positions 202-238 are disordered; it reads GCNTSENVSPVKQVSRKSPSDTEGLVKSLPSGSHQGP. The span at 203 to 213 shows a compositional bias: polar residues; that stretch reads CNTSENVSPVK. Residues Ser206, Ser210, Ser219, and Ser221 each carry the phosphoserine modification. The ITIM motif 1 signature appears at 239–244; that stretch reads VIYAQL. Tyr241 carries the post-translational modification Phosphotyrosine. Position 260 is a phosphoserine (Ser260). Residues 261 to 266 carry the ITIM motif 2 motif; the sequence is VVYADI. Phosphotyrosine is present on Tyr263.

It belongs to the myelin P0 protein family. In terms of assembly, interacts with phosphorylated PTPN11/SHP-2. In terms of processing, phosphorylated on tyrosine residues upon stimulation with pervanadate and concanavalin-A (ConA). Phosphorylation at Tyr-241 and Tyr-263 is required for interaction with PTPN11/SHP-2. Dephosphorylated by PTPN11/SHP-2 (in vitro). N-glycosylated.

It localises to the membrane. In terms of biological role, cell surface receptor, which is involved in signal transduction processes. Recruits PTPN11/SHP-2 to the cell membrane and is a putative substrate of PTPN11/SHP-2. Is a major receptor for concanavalin-A (ConA) and is involved in cellular signaling induced by ConA, which probably includes Src family tyrosine-protein kinases. May be involved in regulation of integrin-mediated cell motility. The protein is Myelin protein zero-like protein 1 (MPZL1) of Bos taurus (Bovine).